The sequence spans 594 residues: Aspartate--tRNA(Asp/Asn) ligase (594 aa).

E175 is an L-aspartate binding site. The segment at 199–202 is aspartate; it reads QQFK. The L-aspartate site is built by R221 and H455. 221–223 contributes to the ATP binding site; that stretch reads RDE. E488 lines the ATP pocket. Position 495 (R495) interacts with L-aspartate. 540 to 543 lines the ATP pocket; that stretch reads GIDR.

It belongs to the class-II aminoacyl-tRNA synthetase family. Type 1 subfamily. Homodimer.

Its subcellular location is the cytoplasm. It carries out the reaction tRNA(Asx) + L-aspartate + ATP = L-aspartyl-tRNA(Asx) + AMP + diphosphate. Aspartyl-tRNA synthetase with relaxed tRNA specificity since it is able to aspartylate not only its cognate tRNA(Asp) but also tRNA(Asn). Reaction proceeds in two steps: L-aspartate is first activated by ATP to form Asp-AMP and then transferred to the acceptor end of tRNA(Asp/Asn). This chain is Aspartate--tRNA(Asp/Asn) ligase, found in Ruegeria sp. (strain TM1040) (Silicibacter sp.).